A 268-amino-acid chain; its full sequence is Undecaprenyl-diphosphatase (268 aa).

The next 7 helical transmembrane spans lie at 5 to 25 (TIAQ…IPVS), 43 to 63 (GKAF…SVYA), 84 to 104 (LGIL…YQII), 107 to 127 (VLFE…IVLL), 184 to 204 (AAEF…AYDL), 214 to 234 (ADLQ…VLVV), and 247 to 267 (ALFG…VLVL).

Belongs to the UppP family.

The protein localises to the cell inner membrane. The enzyme catalyses di-trans,octa-cis-undecaprenyl diphosphate + H2O = di-trans,octa-cis-undecaprenyl phosphate + phosphate + H(+). Catalyzes the dephosphorylation of undecaprenyl diphosphate (UPP). Confers resistance to bacitracin. This is Undecaprenyl-diphosphatase from Chelativorans sp. (strain BNC1).